We begin with the raw amino-acid sequence, 210 residues long: Cdc42 effector protein 2 (210 aa).

Ser2 carries the N-acetylserine modification. Positions 30–44 (ISPPLGDFRHTIHIG) constitute a CRIB domain. 3 positions are modified to phosphoserine: Ser31, Ser101, and Ser141. The segment at 124–145 (AQAPPKPPRLHLETPQASPQEA) is disordered.

It belongs to the BORG/CEP family. Interacts with CDC42 and RHOQ, in a GTP-dependent manner, and with SEPT7.

The protein resides in the endomembrane system. The protein localises to the cytoplasm. It localises to the cytoskeleton. Its function is as follows. Probably involved in the organization of the actin cytoskeleton. May act downstream of CDC42 to induce actin filament assembly leading to cell shape changes. Induces pseudopodia formation in fibroblasts in a CDC42-dependent manner. The polypeptide is Cdc42 effector protein 2 (CDC42EP2) (Bos taurus (Bovine)).